Reading from the N-terminus, the 125-residue chain is Actin, alpha skeletal muscle (125 aa).

Belongs to the actin family. Polymerization of globular actin (G-actin) leads to a structural filament (F-actin) in the form of a two-stranded helix. Each actin can bind to 4 others. Post-translationally, methylated at His-75 by SETD3.

The protein localises to the cytoplasm. Its subcellular location is the cytoskeleton. In terms of biological role, actins are highly conserved proteins that are involved in various types of cell motility and are ubiquitously expressed in all eukaryotic cells. In Pleurodeles waltl (Iberian ribbed newt), this protein is Actin, alpha skeletal muscle.